The chain runs to 89 residues: Protein M7 (89 aa).

The first 25 residues, 1 to 25, serve as a signal peptide directing secretion; that stretch reads MAAMKSLATAILVVLLLRRLPRGLS. 4 disulfides stabilise this stretch: Cys-28–Cys-65, Cys-38–Cys-54, Cys-55–Cys-80, and Cys-67–Cys-87.

This sequence belongs to the A9/FIL1 family. Tapetum of anthers.

It is found in the secreted. This chain is Protein M7 (M7), found in Lilium henryi (Henry's lily).